The sequence spans 258 residues: tRNA pseudouridine synthase A (258 aa).

The active-site Nucleophile is aspartate 53. A substrate-binding site is contributed by tyrosine 111.

It belongs to the tRNA pseudouridine synthase TruA family. As to quaternary structure, homodimer.

The enzyme catalyses uridine(38/39/40) in tRNA = pseudouridine(38/39/40) in tRNA. In terms of biological role, formation of pseudouridine at positions 38, 39 and 40 in the anticodon stem and loop of transfer RNAs. The protein is tRNA pseudouridine synthase A of Streptococcus agalactiae serotype V (strain ATCC BAA-611 / 2603 V/R).